The following is a 416-amino-acid chain: Thyroid hormone receptor alpha (416 aa).

Residues 1–13 (MEPMSNKQDSNSS) are compositionally biased toward polar residues. The disordered stretch occupies residues 1–37 (MEPMSNKQDSNSSEGDEKGWPDVPKRKRKNSQCSMKS). Residues 1–58 (MEPMSNKQDSNSSEGDEKGWPDVPKRKRKNSQCSMKSMSALSVSVPGYIPSYLEKDEP) are modulating. Residues 15–24 (GDEKGWPDVP) show a composition bias toward basic and acidic residues. The Zn(2+) site is built by cysteine 59, cysteine 62, cysteine 76, cysteine 79, cysteine 97, cysteine 103, cysteine 113, and cysteine 116. 2 consecutive NR C4-type zinc fingers follow at residues 59-79 (CVVC…CEGC) and 97-121 (CKYE…FKKC). The nuclear receptor DNA-binding region spans 59–133 (CVVCGDKATG…VGMAMDLVLD (75 aa)). Residues 169 to 413 (AEWELIRMAT…PPLFLEVFED (245 aa)) form the NR LBD domain. Arginine 234 contributes to the 3,3',5-triiodo-L-thyronine binding site.

It belongs to the nuclear hormone receptor family. NR1 subfamily.

Its subcellular location is the nucleus. In terms of biological role, nuclear hormone receptor that can act as a repressor or activator of transcription. High affinity receptor for thyroid hormones, including triiodothyronine and thyroxine. This Hippoglossus hippoglossus (Atlantic halibut) protein is Thyroid hormone receptor alpha (thra).